A 433-amino-acid chain; its full sequence is Ribosomal RNA small subunit methyltransferase B (433 aa).

Residues 254–260 (CAAPGGK), Asp277, Asp303, and Asp322 each bind S-adenosyl-L-methionine. Residue Cys375 is the Nucleophile of the active site.

The protein belongs to the class I-like SAM-binding methyltransferase superfamily. RsmB/NOP family.

The protein localises to the cytoplasm. It catalyses the reaction cytidine(967) in 16S rRNA + S-adenosyl-L-methionine = 5-methylcytidine(967) in 16S rRNA + S-adenosyl-L-homocysteine + H(+). Functionally, specifically methylates the cytosine at position 967 (m5C967) of 16S rRNA. This Sodalis glossinidius (strain morsitans) protein is Ribosomal RNA small subunit methyltransferase B.